The sequence spans 355 residues: Alpha-N-acetylneuraminide alpha-2,8-sialyltransferase (355 aa).

Residues 1–28 (MSPCGRALHTSRGAMAMLARKFPRTRLP) lie on the Cytoplasmic side of the membrane. The helical; Signal-anchor for type II membrane protein transmembrane segment at 29–47 (VGASALCVVVLCWLYIFPV) threads the bilayer. The Lumenal portion of the chain corresponds to 48-355 (YRLPNEKEIV…CEEPSPQPTS (308 aa)). Asn-70 and Asn-118 each carry an N-linked (GlcNAc...) asparagine glycan. 2 disulfides stabilise this stretch: Cys-137–Cys-286 and Cys-151–Cys-346. CMP-N-acetyl-beta-neuraminate contacts are provided by Asn-142 and Asn-165. N-linked (GlcNAc...) asparagine glycosylation is found at Asn-213 and Asn-244. Residues Ser-273, Thr-274, Gly-275, Trp-295, and His-309 each contribute to the CMP-N-acetyl-beta-neuraminate site. Catalysis depends on His-321, which acts as the Proton donor/acceptor.

Belongs to the glycosyltransferase 29 family.

It localises to the golgi apparatus membrane. The catalysed reaction is an N-acetyl-alpha-neuraminyl-(2-&gt;3)-beta-D-galactosyl derivative + CMP-N-acetyl-beta-neuraminate = an N-acetyl-alpha-neuraminyl-(2-&gt;8)-N-acetyl-alpha-neuraminyl-(2-&gt;3)-beta-D-galactosyl derivative + CMP + H(+). It carries out the reaction a ganglioside GM3 (d18:1(4E)) + CMP-N-acetyl-beta-neuraminate = a ganglioside GD3 (d18:1(4E)) + CMP + H(+). The enzyme catalyses a ganglioside GD3 (d18:1(4E)) + CMP-N-acetyl-beta-neuraminate = a ganglioside GT3 (d18:1(4E)) + CMP + H(+). It catalyses the reaction a ganglioside GD1a (d18:1(4E)) + CMP-N-acetyl-beta-neuraminate = a ganglioside GT1a (d18:1(4E)) + CMP + H(+). The catalysed reaction is a ganglioside GT1b (d18:1(4E)) + CMP-N-acetyl-beta-neuraminate = a ganglioside GQ1b (d18:1(4E)) + CMP + H(+). It carries out the reaction a ganglioside GM1b (d18:1(4E)) + CMP-N-acetyl-beta-neuraminate = a ganglioside GD1c (d18:1(4E)) + CMP + H(+). The enzyme catalyses a ganglioside GD3 + CMP-N-acetyl-beta-neuraminate = a ganglioside GT3 + CMP + H(+). It catalyses the reaction [alpha-N-acetylneuraminyl-(2-&gt;8)](n)-alpha-N-acetylneuraminyl-(2-&gt;8)-alpha-N-acetylneuraminyl-(2-&gt;3)-beta-D-galactosyl-(1-&gt;4)-beta-D-glucosyl-(1&lt;-&gt;1)-ceramide + CMP-N-acetyl-beta-neuraminate = [alpha-N-acetylneuraminyl-(2-&gt;8)](n+1)-alpha-N-acetylneuraminyl-(2-&gt;8)-alpha-N-acetylneuraminyl-(2-&gt;3)-beta-D-galactosyl-(1-&gt;4)-beta-D-glucosyl-(1&lt;-&gt;1)-ceramide + CMP + H(+). The protein operates within protein modification; protein glycosylation. It participates in lipid metabolism; sphingolipid metabolism. Its function is as follows. Catalyzes the addition of sialic acid in alpha 2,8-linkage to the sialic acid moiety of the ganglioside GM3 to form ganglioside GD3; gangliosides are a subfamily of complex glycosphingolipds that contain one or more residues of sialic acid. Can catalyze the addition of a second alpha-2,8- sialic acid to GD3 to form GT3. Can use GM1b, GD1a and GT1b as acceptor substrates to synthesize GD1c, GT1a and GQ1b respectively. The polypeptide is Alpha-N-acetylneuraminide alpha-2,8-sialyltransferase (Mus musculus (Mouse)).